The primary structure comprises 276 residues: Secreted LysM effector LysM10 (276 aa).

A signal peptide spans 1–22; that stretch reads MLLSLVKFGILSVFLLAQEAVA. N-linked (GlcNAc...) asparagine glycans are attached at residues N27, N104, and N140. Residues 219-264 enclose the LysM domain; the sequence is KTYIAKEDDTCKSISEAQSISTDRLVEVNHLDYSCSSLTSGTALCI. Residue N267 is glycosylated (N-linked (GlcNAc...) asparagine).

Belongs to the secreted LysM effector family.

It is found in the secreted. In terms of biological role, secreted LysM effector that might have a role in sequestration of chitin oligosaccharides (breakdown products of fungal cell walls that are released during invasion and act as triggers of host immunity) to dampen host defense. This chain is Secreted LysM effector LysM10, found in Penicillium expansum (Blue mold rot fungus).